Reading from the N-terminus, the 436-residue chain is UDP-glucuronate 4-epimerase 5 (436 aa).

2 helical membrane-spanning segments follow: residues 36-56 (LTLWASLFLALFLFYLVLSPP) and 95-115 (GLTVLVTGASGFVGTHVSIAL). An NAD(+)-binding site is contributed by 97 to 128 (TVLVTGASGFVGTHVSIALRRRGDGVLGLDNF). The active-site Proton acceptor is the tyrosine 247.

This sequence belongs to the NAD(P)-dependent epimerase/dehydratase family. In terms of assembly, homodimer. As to expression, in leaves, pollen and siliques, but not in roots or flowers.

It localises to the golgi apparatus. Its subcellular location is the golgi stack membrane. It carries out the reaction UDP-alpha-D-glucuronate = UDP-alpha-D-galacturonate. Its function is as follows. Involved in the synthesis of the negatively charged monosaccharide that forms the backbone of pectic cell wall components. The sequence is that of UDP-glucuronate 4-epimerase 5 (GAE5) from Arabidopsis thaliana (Mouse-ear cress).